The following is a 134-amino-acid chain: Rubredoxin-2 (134 aa).

Positions 1–53 (MAKYQCPDCQYIYDECKGEPHEGFQPNTNWGEIPEEWACPDCAVRDKIDFKML) constitute a Rubredoxin-like domain. Fe cation contacts are provided by Cys-6, Cys-9, Cys-39, and Cys-42. Residues 99-116 (SITDERENTPDNKVERRS) show a composition bias toward basic and acidic residues. The segment at 99-134 (SITDERENTPDNKVERRSQSQAVRRSSVKKIKNNKR) is disordered. Positions 124–134 (SSVKKIKNNKR) are enriched in basic residues.

Belongs to the rubredoxin family. The cofactor is Fe(3+).

Its subcellular location is the cytoplasm. It participates in hydrocarbon metabolism; alkane degradation. Involved in the hydrocarbon hydroxylating system, which transfers electrons from NADH to rubredoxin reductase and then through rubredoxin to alkane 1 monooxygenase. This Pseudomonas putida (Arthrobacter siderocapsulatus) protein is Rubredoxin-2 (alkF).